The chain runs to 130 residues: uncharacterized protein (130 aa).

Positions 41 to 64 are disordered; sequence DDKDDHMDNQPKTSQTSKKVKLSE.

This is an uncharacterized protein from Streptococcus pyogenes serotype M6 (strain ATCC BAA-946 / MGAS10394).